The following is a 513-amino-acid chain: uncharacterized protein (513 aa).

Residues isoleucine 254–leucine 447 form the HDOD domain.

This is an uncharacterized protein from Treponema pallidum (strain Nichols).